A 582-amino-acid polypeptide reads, in one-letter code: Formate--tetrahydrofolate ligase (582 aa).

65 to 72 lines the ATP pocket; sequence TPLGEGKT.

The protein belongs to the formate--tetrahydrofolate ligase family.

It carries out the reaction (6S)-5,6,7,8-tetrahydrofolate + formate + ATP = (6R)-10-formyltetrahydrofolate + ADP + phosphate. It participates in one-carbon metabolism; tetrahydrofolate interconversion. The chain is Formate--tetrahydrofolate ligase from Vibrio cholerae serotype O1 (strain ATCC 39315 / El Tor Inaba N16961).